Here is a 318-residue protein sequence, read N- to C-terminus: tRNA-cytidine(32) 2-sulfurtransferase (318 aa).

Residues 52–57 carry the PP-loop motif motif; it reads SGGKDS. Residues Cys127, Cys130, and Cys218 each coordinate [4Fe-4S] cluster.

The protein belongs to the TtcA family. Homodimer. Mg(2+) serves as cofactor. The cofactor is [4Fe-4S] cluster.

The protein resides in the cytoplasm. It catalyses the reaction cytidine(32) in tRNA + S-sulfanyl-L-cysteinyl-[cysteine desulfurase] + AH2 + ATP = 2-thiocytidine(32) in tRNA + L-cysteinyl-[cysteine desulfurase] + A + AMP + diphosphate + H(+). Its pathway is tRNA modification. Functionally, catalyzes the ATP-dependent 2-thiolation of cytidine in position 32 of tRNA, to form 2-thiocytidine (s(2)C32). The sulfur atoms are provided by the cysteine/cysteine desulfurase (IscS) system. This chain is tRNA-cytidine(32) 2-sulfurtransferase, found in Actinobacillus pleuropneumoniae serotype 7 (strain AP76).